A 123-amino-acid chain; its full sequence is MKKINKDIGSFSEDLAKKYLEKNDYSILDCNFKNFLGEIDIICKKNTLLIIVEVKSRYNNNYGLPRESVNFSKQRSIIKVANSYINYKRLPNINVRFDVIEVYLNLESTNFKINHIKDAFRLN.

It belongs to the UPF0102 family.

The protein is UPF0102 protein Cbei_1183 of Clostridium beijerinckii (strain ATCC 51743 / NCIMB 8052) (Clostridium acetobutylicum).